Reading from the N-terminus, the 563-residue chain is MEFLEYLTPITSHQWGIGSVFLLISIPLIVTRLLTTFWSWRELSAANQKAPGQKRGPTRPTTIPLIGHIVSFLLDGPGFLYNTARYYGRGIPVRVHLATFPSYVISGPELVSAFLKDSTRSLTPMKRSLNYMEHAFGCPHDLVKSFATSDDKDMEQQIHSALQNMLSGPRLGILSERYQQSVKSQVLSVDAGIGDEWVELPDLCTFVETHVFQAATRTIFGPSIVDLNPTLAKDFWNFNKRVKTMFLGIPAWANRTAIRARDDMTEDIKRWQRHAEKNCNIDEIPEDVEWEEYYGSKSTRIRQQLLTKRGITNESARAAENLSMMWATNANSIPAACWFLLQTLHDPLLQARVRKELDAVRIHDTEETNKAAAFKFDITGLTESPLCQSVYAEVLRLGVAAMIVREPTHDNLALGDWKFKKDEFISVPTNNELMDPDFWNSGTPKDPHPLDKFWADRFLVHPDDPQSGPRKDAKKQKAKSDGKPYFSMDGCTWNWIPYGGGAHLCPGRNFAKREIMLTSAIMLTAFDIELLTDTLPKHDKSLFGFGTLPPIGKAPCRIRRRQL.

Residues 10-30 form a helical membrane-spanning segment; that stretch reads ITSHQWGIGSVFLLISIPLIV. The tract at residues 462–482 is disordered; sequence PDDPQSGPRKDAKKQKAKSDG. C505 lines the heme pocket.

Belongs to the cytochrome P450 family. It depends on heme as a cofactor.

Its subcellular location is the membrane. The protein operates within secondary metabolite biosynthesis; terpenoid biosynthesis. Functionally, cytochrome P450 monooxygenase; part of the gene cluster that mediates the biosynthesis of enfumafungin, a glycosylated fernene-type triterpenoid with potent antifungal activity, mediated by its interaction with beta-1,3-glucan synthase and the fungal cell wall. The pathway begins with the terpene cyclase-glycosyl transferase fusion protein that most likely uses 2,3-oxidosqualene as substrate and catalyzes glycosylation immediately after cyclization. The fernene glycoside then could be processed by the desaturase efuI which catalyzes isomerization of a double bond established by efuA to form the core structure. The latter would then undergo a series of hydroxylations in unknown order at C-2, C-19, C-23 and C-25, which would be catalyzed by two of the three cytochrome P450 monooxygenases efuB, efuG or efuH. The hydroxy-group at C-25 becomes oxidized by the dehydrogenase efuE to enable a spontaneous, non-enzymatic hemiacetal formation with C-23. After hydroxylation at C-2, acetylation by the acetyltransferase efuC takes place. The final steps in enfumafungin biosynthesis require expansion of the 5-membered ring by lactonization via a Baeyer-Villiger reaction mediated by one of the BGC's cytochrome P450 monooxygenases (efuB, efuG or efuH) followed by ring cleavage. This type of reaction would establish a double bond between C-20 and C-21 which could be reduced by the reductase efuL to form the final product. The polypeptide is Cytochrome P450 monooxygenase efuG (Hormonema carpetanum).